We begin with the raw amino-acid sequence, 430 residues long: Phosphomethylpyrimidine synthase 2 (430 aa).

Residues Asn-66, Met-95, Tyr-124, His-164, 186–188, 227–230, and Glu-266 each bind substrate; these read SRG and DGFR. His-270 lines the Zn(2+) pocket. Position 293 (Tyr-293) interacts with substrate. Zn(2+) is bound at residue His-334. Residues Cys-411, Cys-414, and Cys-418 each coordinate [4Fe-4S] cluster.

Belongs to the ThiC family. In terms of assembly, homodimer. [4Fe-4S] cluster serves as cofactor.

It carries out the reaction 5-amino-1-(5-phospho-beta-D-ribosyl)imidazole + S-adenosyl-L-methionine = 4-amino-2-methyl-5-(phosphooxymethyl)pyrimidine + CO + 5'-deoxyadenosine + formate + L-methionine + 3 H(+). The protein operates within cofactor biosynthesis; thiamine diphosphate biosynthesis. Catalyzes the synthesis of the hydroxymethylpyrimidine phosphate (HMP-P) moiety of thiamine from aminoimidazole ribotide (AIR) in a radical S-adenosyl-L-methionine (SAM)-dependent reaction. The polypeptide is Phosphomethylpyrimidine synthase 2 (Syntrophotalea carbinolica (strain DSM 2380 / NBRC 103641 / GraBd1) (Pelobacter carbinolicus)).